The chain runs to 444 residues: Orexin receptor type 2 (444 aa).

Positions 1-10 (MSGTKLEDSP) are enriched in basic and acidic residues. A disordered region spans residues 1 to 30 (MSGTKLEDSPPCRNWSSAPELNETQEPFLN). Residues 1–54 (MSGTKLEDSPPCRNWSSAPELNETQEPFLNPTDYDDEEFLRYLWREYLHPKEYE) are Extracellular-facing. N-linked (GlcNAc...) asparagine glycosylation is found at asparagine 14 and asparagine 22. Residues 14 to 27 (NWSSAPELNETQEP) show a composition bias toward polar residues. A required for response to orexin-A region spans residues 33 to 49 (DYDDEEFLRYLWREYLH). The chain crosses the membrane as a helical span at residues 55-75 (WVLIAGYIIVFVVALIGNVLV). The Cytoplasmic segment spans residues 76 to 88 (CVAVWKNHHMRTV). A helical transmembrane segment spans residues 89-110 (TNYFIVNLSLADVLVTITCLPA). Topologically, residues 111 to 127 (TLVVDITETWFFGQSLC) are extracellular. A disulfide bond links cysteine 127 and cysteine 210. A helical membrane pass occupies residues 128–150 (KVIPYLQTVSVSVSVLTLSCIAL). At 151–170 (DRWYAICHPLMFKSTAKRAR) the chain is on the cytoplasmic side. The helical transmembrane segment at 171-191 (NSIVIIWIVSCIIMIPQAIVM) threads the bilayer. At 192-222 (ECSTMLPGLANKTTLFTVCDERWGGEIYPKM) the chain is on the extracellular side. N-linked (GlcNAc...) asparagine glycosylation occurs at asparagine 202. Residues 223 to 243 (YHICFFLVTYMAPLCLMVLAY) form a helical membrane-spanning segment. Residues 244 to 304 (LQIFRKLWCR…QIRARRKTAR (61 aa)) lie on the Cytoplasmic side of the membrane. The chain crosses the membrane as a helical span at residues 305 to 326 (MLMVVLLVFAICYLPISILNVL). Residues 327 to 342 (KRVFGMFTHTEDRETV) are Extracellular-facing. The helical transmembrane segment at 343-366 (YAWFTFSHWLVYANSAANPIIYNF) threads the bilayer. Residues 367 to 444 (LSGKFREEFK…ANGAGQLQNW (78 aa)) are Cytoplasmic-facing.

This sequence belongs to the G-protein coupled receptor 1 family.

The protein resides in the cell membrane. Nonselective, high-affinity receptor for both orexin-A and orexin-B neuropeptides. Triggers an increase in cytoplasmic Ca(2+) levels in response to orexin-A binding. The protein is Orexin receptor type 2 (HCRTR2) of Sus scrofa (Pig).